The chain runs to 317 residues: tRNA pseudouridine synthase B (317 aa).

The active-site Nucleophile is Asp-47.

The protein belongs to the pseudouridine synthase TruB family. Type 1 subfamily.

The catalysed reaction is uridine(55) in tRNA = pseudouridine(55) in tRNA. Responsible for synthesis of pseudouridine from uracil-55 in the psi GC loop of transfer RNAs. This chain is tRNA pseudouridine synthase B, found in Shewanella sp. (strain ANA-3).